A 486-amino-acid chain; its full sequence is NADH-quinone oxidoreductase subunit N (486 aa).

The next 14 membrane-spanning stretches (helical) occupy residues 8 to 28 (LIAL…ILSI), 36 to 56 (FIAF…YFLI), 74 to 94 (ILYI…AYPW), 104 to 124 (EFYL…ISNH), 125 to 145 (MASL…LIAY), 160 to 180 (LVLS…IYAI), 204 to 224 (VLFG…MVPF), 239 to 259 (VLSF…LYFF), 270 to 290 (IFLI…LMAI), 298 to 318 (FFGY…LVSK), 329 to 349 (GIFL…INLF), 374 to 394 (ASIV…LGFF), 407 to 427 (HLWT…YGYL), and 459 to 479 (ILIF…NPLI).

Belongs to the complex I subunit 2 family. In terms of assembly, NDH-1 is composed of 13 different subunits. Subunits NuoA, H, J, K, L, M, N constitute the membrane sector of the complex.

The protein resides in the cell membrane. It carries out the reaction a quinone + NADH + 5 H(+)(in) = a quinol + NAD(+) + 4 H(+)(out). Its function is as follows. NDH-1 shuttles electrons from NADH, via FMN and iron-sulfur (Fe-S) centers, to quinones in the respiratory chain. The immediate electron acceptor for the enzyme in this species is believed to be ubiquinone. Couples the redox reaction to proton translocation (for every two electrons transferred, four hydrogen ions are translocated across the cytoplasmic membrane), and thus conserves the redox energy in a proton gradient. In Buchnera aphidicola subsp. Schizaphis graminum (strain Sg), this protein is NADH-quinone oxidoreductase subunit N.